Consider the following 350-residue polypeptide: Phosphoribosylformylglycinamidine cyclo-ligase (350 aa).

It belongs to the AIR synthase family.

The protein resides in the cytoplasm. The catalysed reaction is 2-formamido-N(1)-(5-O-phospho-beta-D-ribosyl)acetamidine + ATP = 5-amino-1-(5-phospho-beta-D-ribosyl)imidazole + ADP + phosphate + H(+). It functions in the pathway purine metabolism; IMP biosynthesis via de novo pathway; 5-amino-1-(5-phospho-D-ribosyl)imidazole from N(2)-formyl-N(1)-(5-phospho-D-ribosyl)glycinamide: step 2/2. The polypeptide is Phosphoribosylformylglycinamidine cyclo-ligase (Cupriavidus necator (strain ATCC 17699 / DSM 428 / KCTC 22496 / NCIMB 10442 / H16 / Stanier 337) (Ralstonia eutropha)).